Consider the following 699-residue polypeptide: DnaJ homolog subfamily C member 14 (699 aa).

Residues 1–230 (MAQKHPGEGG…RHRLGRKRSQ (230 aa)) are disordered. Residues 75-84 (HGPPRGPGPP) are compositionally biased toward pro residues. The segment covering 86–102 (AEEDPDQSEASSEESGV) has biased composition (acidic residues). Residues 117–133 (DGNSSFLSIPSTCNCQG) show a composition bias toward polar residues. The span at 163–176 (GEDEELEGEYDEEE) shows a compositional bias: acidic residues. Over residues 203-218 (PAKEDTREGGRRDPRS) the composition is skewed to basic and acidic residues. Residues 219 to 228 (PGRHRLGRKR) are compositionally biased toward basic residues. Helical transmembrane passes span 251–271 (AGFWWLIELLVLVGEYVETCG), 301–321 (GWAQVMFQFLSQGFCYGAGLF), and 327–347 (LVGALLLLALALLLGCLQLGW). The region spanning 444-508 (NPFHVLGVEA…ERRKEYEMKR (65 aa)) is the J domain. Residues 655-699 (MSNGNFFAAPQPGPGATAASKPNSTVPKGEAKPKRRKKVRRPFQR) form a disordered region. The segment covering 662 to 673 (AAPQPGPGATAA) has biased composition (low complexity). Residues 687–699 (PKRRKKVRRPFQR) are compositionally biased toward basic residues.

Interacts with the FxxxFxxxF motif of DRD1 via its C-terminal domain. Interacts with pestivirus nonstructural protein NS2.

The protein localises to the endoplasmic reticulum membrane. Functionally, regulates the export of target proteins, such as DRD1, from the endoplasmic reticulum to the cell surface. Promotes cleavage of pestivirus polyprotein. This chain is DnaJ homolog subfamily C member 14 (DNAJC14), found in Bos taurus (Bovine).